The sequence spans 620 residues: Chaperone protein HscA homolog (620 aa).

Belongs to the heat shock protein 70 family.

Functionally, chaperone involved in the maturation of iron-sulfur cluster-containing proteins. Has a low intrinsic ATPase activity which is markedly stimulated by HscB. The protein is Chaperone protein HscA homolog of Acinetobacter baumannii (strain SDF).